Here is a 128-residue protein sequence, read N- to C-terminus: Large ribosomal subunit protein bL12 (128 aa).

The protein belongs to the bacterial ribosomal protein bL12 family. Homodimer. Part of the ribosomal stalk of the 50S ribosomal subunit. Forms a multimeric L10(L12)X complex, where L10 forms an elongated spine to which 2 to 4 L12 dimers bind in a sequential fashion. Binds GTP-bound translation factors.

In terms of biological role, forms part of the ribosomal stalk which helps the ribosome interact with GTP-bound translation factors. Is thus essential for accurate translation. This Aquifex aeolicus (strain VF5) protein is Large ribosomal subunit protein bL12.